The following is a 359-amino-acid chain: Protein Wnt-2 (359 aa).

The first 25 residues, 1 to 25 (MNAPLAGIWPWLPLLWAWLVPEVSS), serve as a signal peptide directing secretion. Cystine bridges form between Cys75–Cys86, Cys126–Cys134, Cys136–Cys156, Cys205–Cys219, Cys207–Cys214, Cys277–Cys308, Cys293–Cys303, Cys307–Cys347, Cys323–Cys338, Cys325–Cys335, and Cys330–Cys331. The O-palmitoleoyl serine; by PORCN moiety is linked to residue Ser211. N-linked (GlcNAc...) asparagine glycosylation is present at Asn294.

Belongs to the Wnt family. In terms of processing, palmitoleoylation is required for efficient binding to frizzled receptors. Depalmitoleoylation leads to Wnt signaling pathway inhibition.

The protein localises to the secreted. It localises to the extracellular space. The protein resides in the extracellular matrix. In terms of biological role, ligand for members of the frizzled family of seven transmembrane receptors. Probable developmental protein. May be a signaling molecule which affects the development of discrete regions of tissues. Is likely to signal over only few cell diameters. The chain is Protein Wnt-2 (WNT2) from Echinops telfairi (Lesser hedgehog tenrec).